Reading from the N-terminus, the 430-residue chain is F-box/kelch-repeat protein At4g33290 (430 aa).

Residues 1–44 (MITDLPKDLIEEILSRVSMTSMRVVRLTCKSWNTLSNSESFKKM) form the F-box domain. Kelch repeat units follow at residues 161-207 (LLRF…CVQG), 312-363 (VPFI…IIEE), and 383-430 (LVRI…RPTR).

The protein is F-box/kelch-repeat protein At4g33290 of Arabidopsis thaliana (Mouse-ear cress).